We begin with the raw amino-acid sequence, 95 residues long: MLYTLSRSPWQVDIHALLRLVRSGDDILLMQNGVVAALHDSRYVAVLLASPARVVALENDVEARGLVAQISSSIDTISYTEFVNLTVKHASQMAW.

It belongs to the DsrH/TusB family. In terms of assembly, heterohexamer, formed by a dimer of trimers. The hexameric TusBCD complex contains 2 copies each of TusB, TusC and TusD. The TusBCD complex interacts with TusE.

The protein resides in the cytoplasm. Its function is as follows. Part of a sulfur-relay system required for 2-thiolation of 5-methylaminomethyl-2-thiouridine (mnm(5)s(2)U) at tRNA wobble positions. This Cronobacter sakazakii (strain ATCC BAA-894) (Enterobacter sakazakii) protein is Protein TusB.